Here is a 456-residue protein sequence, read N- to C-terminus: uncharacterized protein (456 aa).

A TRAM domain is found at 5 to 63; that stretch reads LVKKGQQISLKIKRLGINGEGIGYYKKLIIFVPGALPKEEVTATITNVTPKFAEGTLQS. [4Fe-4S] cluster is bound by residues cysteine 76, cysteine 82, cysteine 85, and cysteine 165. Residues glutamine 289, tyrosine 318, aspartate 339, and aspartate 387 each coordinate S-adenosyl-L-methionine. The Nucleophile role is filled by cysteine 414.

Belongs to the class I-like SAM-binding methyltransferase superfamily. RNA M5U methyltransferase family.

This is an uncharacterized protein from Enterococcus faecalis (strain ATCC 700802 / V583).